The sequence spans 236 residues: Glucosamine-6-phosphate deaminase (236 aa).

The active-site Proton acceptor; for enolization step is the Asp-62. Asn-128 serves as the catalytic For ring-opening step. The Proton acceptor; for ring-opening step role is filled by His-130. Glu-135 acts as the For ring-opening step in catalysis.

It belongs to the glucosamine/galactosamine-6-phosphate isomerase family. NagB subfamily.

The enzyme catalyses alpha-D-glucosamine 6-phosphate + H2O = beta-D-fructose 6-phosphate + NH4(+). It participates in amino-sugar metabolism; N-acetylneuraminate degradation; D-fructose 6-phosphate from N-acetylneuraminate: step 5/5. Catalyzes the reversible isomerization-deamination of glucosamine 6-phosphate (GlcN6P) to form fructose 6-phosphate (Fru6P) and ammonium ion. The chain is Glucosamine-6-phosphate deaminase from Pediococcus pentosaceus (strain ATCC 25745 / CCUG 21536 / LMG 10740 / 183-1w).